We begin with the raw amino-acid sequence, 183 residues long: RNA pyrophosphohydrolase (183 aa).

In terms of domain architecture, Nudix hydrolase spans 6-149 (GYRPNVGIIL…KREVYRLALE (144 aa)). The short motif at 38–59 (GGINAGETPEQAMFRELEEEVG) is the Nudix box element.

Belongs to the Nudix hydrolase family. RppH subfamily. It depends on a divalent metal cation as a cofactor.

Its function is as follows. Accelerates the degradation of transcripts by removing pyrophosphate from the 5'-end of triphosphorylated RNA, leading to a more labile monophosphorylated state that can stimulate subsequent ribonuclease cleavage. The sequence is that of RNA pyrophosphohydrolase from Thiobacillus denitrificans (strain ATCC 25259 / T1).